Consider the following 1273-residue polypeptide: DNA gyrase subunit A (1273 aa).

The region spanning 42–931 is the Topo IIA-type catalytic domain; that stretch reads LPEVRDGLKP…VDGDVNDEDL (890 aa). Tyr130 acts as the O-(5'-phospho-DNA)-tyrosine intermediate in catalysis. A DOD-type homing endonuclease domain is found at 256–396; sequence LFGAFISGGF…VQQMLLEFGV (141 aa). A GyrA-box motif is present at residues 958-964; the sequence is QKRGGKG.

This sequence belongs to the type II topoisomerase GyrA/ParC subunit family. Heterotetramer, composed of two GyrA and two GyrB chains. In the heterotetramer, GyrA contains the active site tyrosine that forms a transient covalent intermediate with the DNA, while GyrB binds cofactors catalyzes ATP hydrolysis. In terms of processing, this protein undergoes a protein self splicing that involves a post-translational excision of the intervening region (intein) followed by peptide ligation.

It is found in the cytoplasm. It catalyses the reaction ATP-dependent breakage, passage and rejoining of double-stranded DNA.. Its activity is regulated as follows. DNA supercoiling is inhibited by fluoroquinolones; IC(50) 1 ug/ml for sitafloxacin. Functionally, a type II topoisomerase that negatively supercoils closed circular double-stranded (ds) DNA in an ATP-dependent manner to modulate DNA topology and maintain chromosomes in an underwound state. Negative supercoiling favors strand separation, and DNA replication, transcription, recombination and repair, all of which involve strand separation. Also able to catalyze the interconversion of other topological isomers of dsDNA rings, including catenanes and knotted rings. Type II topoisomerases break and join 2 DNA strands simultaneously in an ATP-dependent manner. The protein is DNA gyrase subunit A of Mycobacterium leprae (strain TN).